Consider the following 181-residue polypeptide: Cyclic phosphodiesterase (181 aa).

The active-site Proton donor/acceptor is the His-42. Thr-44 contributes to the substrate binding site. 2 cysteine pairs are disulfide-bonded: Cys-64/Cys-177 and Cys-104/Cys-110. The active-site Proton donor/acceptor is the His-119. Substrate is bound by residues Ser-121 and Tyr-124.

It belongs to the 2H phosphoesterase superfamily. CPD1 family. In terms of tissue distribution, expressed in leaves, stems, roots, floral buds and germinating seeds.

The protein resides in the cytoplasm. It catalyses the reaction ADP-alpha-D-ribose 1'',2''-cyclic phosphate + H2O = ADP-alpha-D-ribose 1''-phosphate + H(+). It carries out the reaction 2',3'-cyclophospho-AMP + H2O = adenosine 2'-phosphate + H(+). The catalysed reaction is 2',3'-cyclophospho-GMP + H2O = guanosine 2'-phosphate + H(+). The enzyme catalyses 2',3'-cyclophospho-UMP + H2O = uridine 2'-phosphate + H(+). It catalyses the reaction 2',3'-cyclophospho-CMP + H2O = cytidine 2'-phosphate + H(+). Inhibited by Cu(2+) and Zn(2+) at 0.5 mM by 93 and 87% respectively. Not inhibited by Ca(2+), Mg(2+), Co(2+), Ni(2+), and EDTA at 0.5 mM. Hydrolyzes ADP-ribose 1'',2''-cyclic phosphate (Appr&gt;1) that is produced during tRNA splicing into ADP-ribose 1''-phosphate (Appr-1''p). Also acts on nucleoside 2',3'-cyclic phosphates. The chain is Cyclic phosphodiesterase from Arabidopsis thaliana (Mouse-ear cress).